A 465-amino-acid polypeptide reads, in one-letter code: Alpha-galacturonidase (465 aa).

11-78 (ITIAYIGGGS…GKWLYKACET (68 aa)) is an NAD(+) binding site. Asn-157 is a substrate binding site. Residue Cys-179 coordinates Mn(2+). His-180 serves as the catalytic Proton donor. A Mn(2+)-binding site is contributed by His-216.

The protein belongs to the glycosyl hydrolase 4 family. As to quaternary structure, homotetramer. It depends on NAD(+) as a cofactor. Mn(2+) serves as cofactor.

The enzyme catalyses [(1-&gt;4)-alpha-D-galacturonosyl](n) + H2O = alpha-D-galacturonate + [(1-&gt;4)-alpha-D-galacturonosyl](n-1). Alpha-galacturonidase able to catalyze the hydrolysis of the chromogenic substrate p-nitrophenyl-alpha-D-galacturonic acid (pNPalphaGalUA). It is probable that alpha-1,4-di-galacturonate (GalUA(2)) is the naturally occurring substrate. This chain is Alpha-galacturonidase, found in Thermoanaerobacterium saccharolyticum (strain DSM 8691 / JW/SL-YS485).